The following is a 432-amino-acid chain: Adenylosuccinate synthetase (432 aa).

Residues 12-18 (GDEGKGK) and 40-42 (GHT) contribute to the GTP site. The active-site Proton acceptor is the D13. Positions 13 and 40 each coordinate Mg(2+). IMP contacts are provided by residues 13 to 16 (DEGK), 38 to 41 (NAGH), T132, R146, Q226, T241, and R305. The active-site Proton donor is H41. Substrate is bound at residue 301-307 (TVTGRKR). GTP-binding positions include R307, 333–335 (KLD), and 415–417 (STS).

This sequence belongs to the adenylosuccinate synthetase family. As to quaternary structure, homodimer. The cofactor is Mg(2+).

It is found in the cytoplasm. It carries out the reaction IMP + L-aspartate + GTP = N(6)-(1,2-dicarboxyethyl)-AMP + GDP + phosphate + 2 H(+). Its pathway is purine metabolism; AMP biosynthesis via de novo pathway; AMP from IMP: step 1/2. Functionally, plays an important role in the de novo pathway of purine nucleotide biosynthesis. Catalyzes the first committed step in the biosynthesis of AMP from IMP. The polypeptide is Adenylosuccinate synthetase (Allorhizobium ampelinum (strain ATCC BAA-846 / DSM 112012 / S4) (Agrobacterium vitis (strain S4))).